The chain runs to 411 residues: Probable tRNA pseudouridine synthase D (411 aa).

D79 serves as the catalytic Nucleophile. The region spanning 150-369 is the TRUD domain; sequence GFPNYFGQQR…STGDRRIVSA (220 aa).

Belongs to the pseudouridine synthase TruD family.

It catalyses the reaction uridine(13) in tRNA = pseudouridine(13) in tRNA. In terms of biological role, could be responsible for synthesis of pseudouridine from uracil-13 in transfer RNAs. This is Probable tRNA pseudouridine synthase D from Thermoplasma acidophilum (strain ATCC 25905 / DSM 1728 / JCM 9062 / NBRC 15155 / AMRC-C165).